The following is a 307-amino-acid chain: Actin maturation protease (307 aa).

The interval 1 to 34 (MSLENDAAAPPPPPLPPPPPPQPPSLARSESSKK) is disordered. The segment covering 9–24 (APPPPPLPPPPPPQPP) has biased composition (pro residues). Positions 80 to 200 (SLIQDGPQCG…WAVASGILLG (121 aa)) are peptidase C39-like. Cysteine 88 is an active-site residue.

The protein belongs to the ACTMAP family.

The protein resides in the cytoplasm. It carries out the reaction N-terminal N(alpha)-acetyl-L-methionyl-L-aspartyl-[protein] + H2O = N-terminal L-aspartyl-[protein] + N-acetyl-L-methionine. It catalyses the reaction N-terminal N(alpha)-acetyl-L-methionyl-L-glutamyl-[protein] + H2O = N-terminal L-glutamyl-[protein] + N-acetyl-L-methionine. The catalysed reaction is N-terminal N(alpha)-acetyl-L-cysteinyl-L-aspartyl-[protein] + H2O = N-terminal L-aspartyl-[protein] + N-acetyl-L-cysteine. The enzyme catalyses N-terminal N(alpha)-acetyl-L-cysteinyl-L-glutamyl-[protein] + H2O = N-terminal L-glutamyl-[protein] + N-acetyl-L-cysteine. In terms of biological role, actin maturation protease that specifically mediates the cleavage of immature acetylated N-terminal actin, thereby contributing to actin maturation. Cleaves N-terminal acetylated methionine of immature cytoplasmic actin after translation. Cleaves N-terminal acetylated cysteine of muscle actin after canonical removal of N-terminal methionine. This chain is Actin maturation protease, found in Danio rerio (Zebrafish).